A 262-amino-acid chain; its full sequence is Carbonic anhydrase 13 (262 aa).

The Alpha-carbonic anhydrase domain occupies 4–261 (LSWGYGEHNG…LKGRRVRASF (258 aa)). Residue His65 is the Proton donor/acceptor of the active site. Residues His95, His97, and His120 each contribute to the Zn(2+) site. 200–201 (TV) is a substrate binding site.

The protein belongs to the alpha-carbonic anhydrase family. Zn(2+) is required as a cofactor. In terms of tissue distribution, expressed in spleen, lung, kidney, heart, brain, skeletal muscle and testis.

The enzyme catalyses hydrogencarbonate + H(+) = CO2 + H2O. With respect to regulation, inhibited by coumarins, sulfonamide derivatives such as acetazolamide (AZA) and Foscarnet (phosphonoformate trisodium salt). Functionally, reversible hydration of carbon dioxide. This Mus musculus (Mouse) protein is Carbonic anhydrase 13 (Ca13).